A 270-amino-acid polypeptide reads, in one-letter code: Putative phosphoenolpyruvate synthase regulatory protein (270 aa).

150-157 (GVSRSGKT) contacts ADP.

This sequence belongs to the pyruvate, phosphate/water dikinase regulatory protein family. PSRP subfamily.

The enzyme catalyses [pyruvate, water dikinase] + ADP = [pyruvate, water dikinase]-phosphate + AMP + H(+). The catalysed reaction is [pyruvate, water dikinase]-phosphate + phosphate + H(+) = [pyruvate, water dikinase] + diphosphate. Functionally, bifunctional serine/threonine kinase and phosphorylase involved in the regulation of the phosphoenolpyruvate synthase (PEPS) by catalyzing its phosphorylation/dephosphorylation. This is Putative phosphoenolpyruvate synthase regulatory protein from Cupriavidus metallidurans (strain ATCC 43123 / DSM 2839 / NBRC 102507 / CH34) (Ralstonia metallidurans).